We begin with the raw amino-acid sequence, 347 residues long: S-adenosylmethionine:tRNA ribosyltransferase-isomerase (347 aa).

The protein belongs to the QueA family. Monomer.

Its subcellular location is the cytoplasm. It carries out the reaction 7-aminomethyl-7-carbaguanosine(34) in tRNA + S-adenosyl-L-methionine = epoxyqueuosine(34) in tRNA + adenine + L-methionine + 2 H(+). Its pathway is tRNA modification; tRNA-queuosine biosynthesis. Transfers and isomerizes the ribose moiety from AdoMet to the 7-aminomethyl group of 7-deazaguanine (preQ1-tRNA) to give epoxyqueuosine (oQ-tRNA). The chain is S-adenosylmethionine:tRNA ribosyltransferase-isomerase from Pseudomonas aeruginosa (strain UCBPP-PA14).